Here is a 390-residue protein sequence, read N- to C-terminus: Chorismate synthase 2 (390 aa).

Residues Arg39 and Arg45 each contribute to the NADP(+) site. FMN-binding positions include Arg132–Ser134, Asn253–Ala254, Gly298, Lys313–Thr317, and Arg339.

It belongs to the chorismate synthase family. As to quaternary structure, homotetramer. Requires FMNH2 as cofactor.

The enzyme catalyses 5-O-(1-carboxyvinyl)-3-phosphoshikimate = chorismate + phosphate. It participates in metabolic intermediate biosynthesis; chorismate biosynthesis; chorismate from D-erythrose 4-phosphate and phosphoenolpyruvate: step 7/7. In terms of biological role, catalyzes the anti-1,4-elimination of the C-3 phosphate and the C-6 proR hydrogen from 5-enolpyruvylshikimate-3-phosphate (EPSP) to yield chorismate, which is the branch point compound that serves as the starting substrate for the three terminal pathways of aromatic amino acid biosynthesis. This reaction introduces a second double bond into the aromatic ring system. The polypeptide is Chorismate synthase 2 (Bacillus thuringiensis subsp. konkukian (strain 97-27)).